The following is a 122-amino-acid chain: Large ribosomal subunit protein uL14 (122 aa).

It belongs to the universal ribosomal protein uL14 family. In terms of assembly, part of the 50S ribosomal subunit. Forms a cluster with proteins L3 and L19. In the 70S ribosome, L14 and L19 interact and together make contacts with the 16S rRNA in bridges B5 and B8.

In terms of biological role, binds to 23S rRNA. Forms part of two intersubunit bridges in the 70S ribosome. The chain is Large ribosomal subunit protein uL14 from Albidiferax ferrireducens (strain ATCC BAA-621 / DSM 15236 / T118) (Rhodoferax ferrireducens).